We begin with the raw amino-acid sequence, 388 residues long: Deoxyguanosinetriphosphate triphosphohydrolase-like protein (388 aa).

Residues 1–32 (MSVGMAAPRAPYSCDPDRSRGRLFAEPPSRTR) form a disordered region. An HD domain is found at 69-205 (RLTHSLEVAQ…AALADDIAYD (137 aa)).

Belongs to the dGTPase family. Type 2 subfamily.

This is Deoxyguanosinetriphosphate triphosphohydrolase-like protein from Bradyrhizobium sp. (strain ORS 278).